The following is a 510-amino-acid chain: Histidine ammonia-lyase (510 aa).

Positions 144–146 (ASG) form a cross-link, 5-imidazolinone (Ala-Gly). 2,3-didehydroalanine (Ser) is present on S145.

The protein belongs to the PAL/histidase family. In terms of processing, contains an active site 4-methylidene-imidazol-5-one (MIO), which is formed autocatalytically by cyclization and dehydration of residues Ala-Ser-Gly.

It localises to the cytoplasm. The catalysed reaction is L-histidine = trans-urocanate + NH4(+). It functions in the pathway amino-acid degradation; L-histidine degradation into L-glutamate; N-formimidoyl-L-glutamate from L-histidine: step 1/3. In Chromobacterium violaceum (strain ATCC 12472 / DSM 30191 / JCM 1249 / CCUG 213 / NBRC 12614 / NCIMB 9131 / NCTC 9757 / MK), this protein is Histidine ammonia-lyase.